The chain runs to 174 residues: Adenylate kinase (174 aa).

Positions 12–41 (STGDMLRAAIKAGTPLGLEAKKIIDEGGLV) are NMP. Residues threonine 13, arginine 18, 39 to 41 (GLV), 67 to 70 (GFPR), and glutamine 74 each bind AMP. Residues 104-141 (GRRVHLASGRTYHVTYNPPKVEGKDDVTGEDLIQRDDD) form an LID region. ATP is bound by residues arginine 105 and 114–115 (TY). AMP-binding residues include arginine 138 and arginine 149.

Belongs to the adenylate kinase family. As to quaternary structure, monomer.

The protein localises to the cytoplasm. The enzyme catalyses AMP + ATP = 2 ADP. Its pathway is purine metabolism; AMP biosynthesis via salvage pathway; AMP from ADP: step 1/1. Catalyzes the reversible transfer of the terminal phosphate group between ATP and AMP. Plays an important role in cellular energy homeostasis and in adenine nucleotide metabolism. The protein is Adenylate kinase of Neisseria cinerea.